Consider the following 214-residue polypeptide: Probable adenylyl-sulfate kinase (214 aa).

ATP is bound at residue 13-20 (GLSGAGKT). Ser87 serves as the catalytic Phosphoserine intermediate. The tract at residues 174–199 (WNRTNTFPLKSRPNPPHRHKSKSSRA) is disordered.

It belongs to the APS kinase family.

It catalyses the reaction adenosine 5'-phosphosulfate + ATP = 3'-phosphoadenylyl sulfate + ADP + H(+). Its pathway is sulfur metabolism; hydrogen sulfide biosynthesis; sulfite from sulfate: step 2/3. Catalyzes the synthesis of activated sulfate. The chain is Probable adenylyl-sulfate kinase from Pseudomonas aeruginosa.